The chain runs to 513 residues: MFQDGSRSSGSGRGLSTTAVSNGGWRTRGFLRGWQIQNTLFNNIKFMILCCFVTILILLGTIRVGNLGSSNADSVNQSFIKETIPILAEIPSDSHSTDLAEPPKADVSPNATYTLEPRIAEIPSDVHSTDLVELPKADISPNATYTLGPRIAEIPSDSHLTDLLEPPKADISPNATYTLGPKITNWDSQRKVWLNQNPEFPNIVNGKARILLLTGSSPGPCDKPIGNYYLLKAVKNKIDYCRLHGIEIVYNMANLDEELSGYWTKLPMIRTLMLSHPEVEWIWWMDSDALFTDILFEIPLPRYENHNLVIHGYPDLLFNQKSWVALNTGIFLLRNCQWSLDLLDAWAPMGPKGKIRDETGKILTAYLKGRPAFEADDQSALIYLLLSQKEKWIEKVYVENQYYLHGFWEGLVDRYEEMIEKYHPGLGDERWPFVTHFVGCKPCGSYADYAVDRCFKSMERAFNFADNQVLKLYGFSHRGLLSPKIKRIRNETVSPLESVDKFDIRRMHMETKP.

The Cytoplasmic segment spans residues 1–39 (MFQDGSRSSGSGRGLSTTAVSNGGWRTRGFLRGWQIQNT). Residues 40–60 (LFNNIKFMILCCFVTILILLG) traverse the membrane as a helical; Signal-anchor for type II membrane protein segment. Residues 61 to 513 (TIRVGNLGSS…IRRMHMETKP (453 aa)) lie on the Lumenal side of the membrane. N-linked (GlcNAc...) asparagine glycans are attached at residues Asn-76, Asn-110, Asn-142, Asn-174, and Asn-490.

This sequence belongs to the glycosyltransferase 34 family.

The protein localises to the golgi apparatus membrane. The catalysed reaction is Transfers an alpha-D-xylosyl residue from UDP-D-xylose to a glucose residue in xyloglucan, forming an alpha-(1-&gt;6)-D-xylosyl-D-glucose linkage.. In terms of biological role, xylosyltransferase specific to UDP-D-xylose that accepts cellohexaose as substrate to produce xyloglucan. This Arabidopsis thaliana (Mouse-ear cress) protein is Xyloglucan 6-xylosyltransferase 4.